A 281-amino-acid polypeptide reads, in one-letter code: 3-methyl-2-oxobutanoate hydroxymethyltransferase (281 aa).

Residues aspartate 44 and aspartate 83 each contribute to the Mg(2+) site. Residues 44 to 45 (DS), aspartate 83, and lysine 112 each bind 3-methyl-2-oxobutanoate. Mg(2+) is bound at residue glutamate 114. Glutamate 180 (proton acceptor) is an active-site residue. The disordered stretch occupies residues 251–281 (RNGTFPGPEHSSRMDPAELAAALGSQDQATE).

The protein belongs to the PanB family. Homodecamer; pentamer of dimers. Requires Mg(2+) as cofactor.

The protein resides in the cytoplasm. The enzyme catalyses 3-methyl-2-oxobutanoate + (6R)-5,10-methylene-5,6,7,8-tetrahydrofolate + H2O = 2-dehydropantoate + (6S)-5,6,7,8-tetrahydrofolate. Its pathway is cofactor biosynthesis; (R)-pantothenate biosynthesis; (R)-pantoate from 3-methyl-2-oxobutanoate: step 1/2. Functionally, catalyzes the reversible reaction in which hydroxymethyl group from 5,10-methylenetetrahydrofolate is transferred onto alpha-ketoisovalerate to form ketopantoate. The sequence is that of 3-methyl-2-oxobutanoate hydroxymethyltransferase from Chloroflexus aurantiacus (strain ATCC 29364 / DSM 637 / Y-400-fl).